The following is a 509-amino-acid chain: Maturase K (509 aa).

This sequence belongs to the intron maturase 2 family. MatK subfamily.

It localises to the plastid. The protein localises to the chloroplast. In terms of biological role, usually encoded in the trnK tRNA gene intron. Probably assists in splicing its own and other chloroplast group II introns. The sequence is that of Maturase K from Galbulimima belgraveana (Northern pigeonberry ash).